We begin with the raw amino-acid sequence, 81 residues long: Fungal defensin micasin (81 aa).

The N-terminal stretch at 1–21 is a signal peptide; it reads MQFTKLATILLVSLMGSAAIA. Positions 22–43 are excised as a propeptide; the sequence is APATNNAAVDAAADATPAVEKR. Intrachain disulfides connect C47–C68, C54–C76, and C58–C78.

Belongs to the invertebrate defensin family.

It is found in the secreted. Functionally, antibacterial peptide with potent activity against both Gram-positive and Gram-negative bacteria. May kill bacteria via an intracellular action mode to affect protein folding. Does not show effects on tested filamentous fungi or on the yeast S.cerevisiae. Does not act by destroying the membrane integrity, which is consistent with its nonamphiphilic architecture. Acts more rapidly than vancomycin, suggesting it does not act by inhibiting cell-wall biosynthesis. Does not cause hemolysis and has no cytotoxic effect on HEK cells. In vivo, is as efficient as vancomycin to protect mouse peritonitis models from S.aureus and P.aeruginosa infections. The protein is Fungal defensin micasin of Arthroderma otae (Microsporum canis).